We begin with the raw amino-acid sequence, 198 residues long: Large ribosomal subunit protein uL13B (198 aa).

Ser2 carries the N-acetylserine; partial modification. At Ser43 the chain carries Phosphoserine. Lys176 participates in a covalent cross-link: Glycyl lysine isopeptide (Lys-Gly) (interchain with G-Cter in ubiquitin). Residues Ser181, Ser185, and Ser187 each carry the phosphoserine modification.

This sequence belongs to the universal ribosomal protein uL13 family. Component of the large ribosomal subunit (LSU). Mature yeast ribosomes consist of a small (40S) and a large (60S) subunit. The 40S small subunit contains 1 molecule of ribosomal RNA (18S rRNA) and 33 different proteins (encoded by 57 genes). The large 60S subunit contains 3 rRNA molecules (25S, 5.8S and 5S rRNA) and 46 different proteins (encoded by 81 genes). Post-translationally, N-terminally acetylated by acetyltransferase NatA.

It localises to the cytoplasm. Functionally, component of the ribosome, a large ribonucleoprotein complex responsible for the synthesis of proteins in the cell. The small ribosomal subunit (SSU) binds messenger RNAs (mRNAs) and translates the encoded message by selecting cognate aminoacyl-transfer RNA (tRNA) molecules. The large subunit (LSU) contains the ribosomal catalytic site termed the peptidyl transferase center (PTC), which catalyzes the formation of peptide bonds, thereby polymerizing the amino acids delivered by tRNAs into a polypeptide chain. The nascent polypeptides leave the ribosome through a tunnel in the LSU and interact with protein factors that function in enzymatic processing, targeting, and the membrane insertion of nascent chains at the exit of the ribosomal tunnel. The sequence is that of Large ribosomal subunit protein uL13B from Saccharomyces cerevisiae (strain ATCC 204508 / S288c) (Baker's yeast).